Consider the following 421-residue polypeptide: Adenylosuccinate synthetase (421 aa).

GTP is bound by residues 11 to 17 (GDEGKGK) and 39 to 41 (GHT). Residue Asp-12 is the Proton acceptor of the active site. Mg(2+) contacts are provided by Asp-12 and Gly-39. IMP contacts are provided by residues 12 to 15 (DEGK), 37 to 40 (NAGH), Thr-124, Arg-138, Gln-220, Thr-235, and Arg-299. Residue His-40 is the Proton donor of the active site. Substrate is bound at residue 295–301 (TTTGRPR). GTP contacts are provided by residues Arg-301, 327 to 329 (KLD), and 409 to 411 (SVG).

It belongs to the adenylosuccinate synthetase family. In terms of assembly, homodimer. Mg(2+) is required as a cofactor.

The protein localises to the cytoplasm. It catalyses the reaction IMP + L-aspartate + GTP = N(6)-(1,2-dicarboxyethyl)-AMP + GDP + phosphate + 2 H(+). It participates in purine metabolism; AMP biosynthesis via de novo pathway; AMP from IMP: step 1/2. In terms of biological role, plays an important role in the de novo pathway of purine nucleotide biosynthesis. Catalyzes the first committed step in the biosynthesis of AMP from IMP. The sequence is that of Adenylosuccinate synthetase from Methanothrix thermoacetophila (strain DSM 6194 / JCM 14653 / NBRC 101360 / PT) (Methanosaeta thermophila).